Here is a 149-residue protein sequence, read N- to C-terminus: MAIAAVDANDRVHQLILLTERLTDLIAKQAVAFETHRPHQAAQYVEETSKLANLYRHESMRVRANVGLVESARLELRQRLMRATEAFDAVLARQSRAVEAAKIVTEGLVHAIAQEVASQRAAPATTYGAGGMVNDRPQHGAAITLNRKA.

The basal body constitutes a major portion of the flagellar organelle and consists of five rings (E,L,P,S, and M) mounted on a central rod.

The protein resides in the bacterial flagellum basal body. The chain is Flagellar basal-body protein FlbY (flbY) from Caulobacter vibrioides (strain ATCC 19089 / CIP 103742 / CB 15) (Caulobacter crescentus).